A 104-amino-acid polypeptide reads, in one-letter code: Large ribosomal subunit protein uL23 (104 aa).

Belongs to the universal ribosomal protein uL23 family. In terms of assembly, part of the 50S ribosomal subunit. Contacts protein L29, and trigger factor when it is bound to the ribosome.

Its function is as follows. One of the early assembly proteins it binds 23S rRNA. One of the proteins that surrounds the polypeptide exit tunnel on the outside of the ribosome. Forms the main docking site for trigger factor binding to the ribosome. The polypeptide is Large ribosomal subunit protein uL23 (Neisseria meningitidis serogroup B (strain ATCC BAA-335 / MC58)).